Reading from the N-terminus, the 441-residue chain is NADH-quinone oxidoreductase subunit D 1 (441 aa).

Belongs to the complex I 49 kDa subunit family. As to quaternary structure, NDH-1 is composed of 14 different subunits. Subunits NuoB, C, D, E, F, and G constitute the peripheral sector of the complex.

It is found in the cell membrane. The catalysed reaction is a quinone + NADH + 5 H(+)(in) = a quinol + NAD(+) + 4 H(+)(out). Functionally, NDH-1 shuttles electrons from NADH, via FMN and iron-sulfur (Fe-S) centers, to quinones in the respiratory chain. The immediate electron acceptor for the enzyme in this species is believed to be a menaquinone. Couples the redox reaction to proton translocation (for every two electrons transferred, four hydrogen ions are translocated across the cytoplasmic membrane), and thus conserves the redox energy in a proton gradient. In Salinispora tropica (strain ATCC BAA-916 / DSM 44818 / JCM 13857 / NBRC 105044 / CNB-440), this protein is NADH-quinone oxidoreductase subunit D 1.